Consider the following 75-residue polypeptide: Small ribosomal subunit protein eS31 (75 aa).

Zn(2+)-binding residues include cysteine 41, cysteine 44, cysteine 60, and cysteine 63. The C4-type zinc-finger motif lies at 41–63 (CPRCGSIMAHHLKPNERWSCGKC).

This sequence belongs to the eukaryotic ribosomal protein eS31 family. In terms of assembly, part of the 30S ribosomal subunit. It depends on Zn(2+) as a cofactor.

In Saccharolobus solfataricus (strain ATCC 35092 / DSM 1617 / JCM 11322 / P2) (Sulfolobus solfataricus), this protein is Small ribosomal subunit protein eS31.